A 333-amino-acid chain; its full sequence is Cell division protein ZipA (333 aa).

Residues 1–5 (MQELR) lie on the Periplasmic side of the membrane. The chain crosses the membrane as a helical span at residues 6–26 (LVLILVGALAIAALLFHGLWT). The Cytoplasmic segment spans residues 27-333 (SRKETSSKFG…KQRVKVFCRK (307 aa)). Over residues 72–81 (KEPAFAREEV) the composition is skewed to basic and acidic residues. The disordered stretch occupies residues 72-119 (KEPAFAREEVPTSDDPLFEGTVSSESNKFTQQEKPTVQQAQPQPQPQP). The segment covering 92 to 107 (TVSSESNKFTQQEKPT) has biased composition (polar residues). Residues 108 to 119 (VQQAQPQPQPQP) are compositionally biased toward low complexity.

Belongs to the ZipA family. In terms of assembly, interacts with FtsZ via their C-terminal domains.

Its subcellular location is the cell inner membrane. In terms of biological role, essential cell division protein that stabilizes the FtsZ protofilaments by cross-linking them and that serves as a cytoplasmic membrane anchor for the Z ring. Also required for the recruitment to the septal ring of downstream cell division proteins. The chain is Cell division protein ZipA from Aliivibrio fischeri (strain ATCC 700601 / ES114) (Vibrio fischeri).